The sequence spans 224 residues: MEIEVVYQHSDFIIINKSEGISVHKDQEEQGLTELVAKQLNVPKVWLVHRLDKVTSGLLILALNAESAAEFSRLFSEHKIHKTYLALSNQKPKKKQGLIIGDMKKAREGAWKLCQTKDNPAITRFESVSCEPNLRLFILKPQTGKTHQLRVAMKSLGSPILGDGLYGKNTEKIDRTYLHATQLEFDYLNNFISVTCLPSQGQFWIKPTVFEQIQVYLTKPFLSK.

Asp52 is an active-site residue.

This sequence belongs to the pseudouridine synthase RluA family.

It catalyses the reaction a uridine in RNA = a pseudouridine in RNA. This is an uncharacterized protein from Haemophilus influenzae (strain ATCC 51907 / DSM 11121 / KW20 / Rd).